Reading from the N-terminus, the 393-residue chain is Cytotoxic and regulatory T-cell molecule (393 aa).

An N-terminal signal peptide occupies residues 1–16 (MWWGALSLLFWVPVQA). Residues 17–111 (AFLKMETVTV…SVKTKQVRVT (95 aa)) enclose the Ig-like V-type domain. At 17-289 (AFLKMETVTV…HTGLARRKSG (273 aa)) the chain is on the extracellular side. 2 cysteine pairs are disulfide-bonded: Cys-36–Cys-96 and Cys-139–Cys-194. 2 N-linked (GlcNAc...) asparagine glycosylation sites follow: Asn-85 and Asn-176. An Ig-like C2-type domain is found at 119–208 (PTVEALVLRR…EGLHGRKLVA (90 aa)). Over residues 218–228 (DQETSDQETSD) the composition is skewed to acidic residues. The tract at residues 218-280 (DQETSDQETS…GLSTEASAQH (63 aa)) is disordered. Positions 229 to 246 (APEQSSLSSQALQQPTST) are enriched in low complexity. Polar residues predominate over residues 247–256 (VSMMENSSIP). The span at 257-267 (ETDKEEKEHAT) shows a compositional bias: basic and acidic residues. A compositionally biased stretch (polar residues) spans 270-280 (PGLSTEASAQH). The helical transmembrane segment at 290–310 (ILLLTLVSFLIFILFIIVQLF) threads the bilayer. Topologically, residues 311–393 (IMKLRKAHVV…KHSRVPESIV (83 aa)) are cytoplasmic. Positions 333–356 (ESYRSRSNNEETSSQENSSQAPQS) are disordered. Residues 342–352 (EETSSQENSSQ) are compositionally biased toward low complexity. Positions 390 to 393 (ESIV) match the PDZ-binding motif.

It belongs to the nectin family. As to quaternary structure, monomer. May form homodimer (via Ig-like V-type domain). Interacts (via Ig-like V-type domain) with CADM1 (via Ig-like V-type domain); the interaction competes with CRTAM homodimerization and CADM1 homodimerization. Interacts (via PDZ-binding motif) with SCRIB (via PDZ domain 3); the interaction promotes CRTAM and SCRIB polarization in a subset of CD4+ T-cells. In the immune system, expression is restricted to activated class-I MHC-restricted cells, including NKT, NK and CD8+ T-cells (at protein level). Transiently expressed in activated CD8+ T-cells and a subset of activated CD4+ T-cells (at protein level). Expressed in activated intestinal T-cells, specifically intraepithelial CD4+ CD8+ T-cells, intraepithelial CD4+ T-cells and, CD8+ T-cells in the intestine epithelium, lamina propria, Peyer's Patches and mesenteric lymph nodes. Also expressed in spleen, brain and testis.

Its subcellular location is the cell membrane. Mediates heterophilic cell-cell adhesion which regulates the activation, differentiation and tissue retention of various T-cell subsets. Interaction with CADM1 promotes natural killer (NK) cell cytotoxicity and IFNG/interferon-gamma secretion by CD8+ T-cells in vitro as well as NK cell-mediated rejection of tumors expressing CADM1 in vivo. Regulates CD8+ T-cell proliferation in response to T-cell receptor (TCR) activation. Appears to be dispensable for CD8+ T-cell-mediated cytotoxicity. Interaction with SCRIB promotes the late phase of cellular polarization of a subset of CD4+ T-cells, which in turn regulates TCR-mediated proliferation and IFNG, IL17 and IL22 production. By interacting with CADM1 on CD8+ dendritic cells, regulates the retention of activated CD8+ T-cells within the draining lymph node. Required for the intestinal retention of intraepithelial CD4+ CD8+ T-cells and, to a lesser extent, intraepithelial and lamina propria CD8+ T-cells and CD4+ T-cells. Interaction with CADM1 promotes the adhesion to gut-associated CD103+ dendritic cells, which may facilitate the expression of gut-homing and adhesion molecules on T-cells and the conversion of CD4+ T-cells into CD4+ CD8+ T-cells. This is Cytotoxic and regulatory T-cell molecule from Mus musculus (Mouse).